We begin with the raw amino-acid sequence, 281 residues long: 4-deoxy-L-threo-5-hexosulose-uronate ketol-isomerase (281 aa).

H198, H200, E205, and H248 together coordinate Zn(2+).

This sequence belongs to the KduI family. Zn(2+) is required as a cofactor.

The enzyme catalyses 5-dehydro-4-deoxy-D-glucuronate = 3-deoxy-D-glycero-2,5-hexodiulosonate. It functions in the pathway glycan metabolism; pectin degradation; 2-dehydro-3-deoxy-D-gluconate from pectin: step 4/5. Functionally, catalyzes the isomerization of 5-dehydro-4-deoxy-D-glucuronate to 3-deoxy-D-glycero-2,5-hexodiulosonate. The polypeptide is 4-deoxy-L-threo-5-hexosulose-uronate ketol-isomerase (Levilactobacillus brevis (strain ATCC 367 / BCRC 12310 / CIP 105137 / JCM 1170 / LMG 11437 / NCIMB 947 / NCTC 947) (Lactobacillus brevis)).